A 35-amino-acid polypeptide reads, in one-letter code: Conotoxin M11.2 (35 aa).

Disulfide bonds link cysteine 2/cysteine 16, cysteine 9/cysteine 21, cysteine 15/cysteine 26, and cysteine 20/cysteine 33.

It belongs to the conotoxin I1 superfamily. Expressed by the venom duct.

Its subcellular location is the secreted. This is Conotoxin M11.2 from Conus magus (Magical cone).